A 240-amino-acid polypeptide reads, in one-letter code: Triosephosphate isomerase (240 aa).

Substrate is bound at residue 9-11 (NWK). His94 (electrophile) is an active-site residue. Glu163 serves as the catalytic Proton acceptor. Residues Gly169, Ser202, and 223–224 (GG) each bind substrate.

The protein belongs to the triosephosphate isomerase family. Homodimer.

The protein resides in the cytoplasm. It catalyses the reaction D-glyceraldehyde 3-phosphate = dihydroxyacetone phosphate. The protein operates within carbohydrate biosynthesis; gluconeogenesis. It functions in the pathway carbohydrate degradation; glycolysis; D-glyceraldehyde 3-phosphate from glycerone phosphate: step 1/1. Involved in the gluconeogenesis. Catalyzes stereospecifically the conversion of dihydroxyacetone phosphate (DHAP) to D-glyceraldehyde-3-phosphate (G3P). In Gloeobacter violaceus (strain ATCC 29082 / PCC 7421), this protein is Triosephosphate isomerase.